The primary structure comprises 150 residues: Small ribosomal subunit protein eS19 (150 aa).

It belongs to the eukaryotic ribosomal protein eS19 family. Part of the 30S ribosomal subunit.

May be involved in maturation of the 30S ribosomal subunit. The protein is Small ribosomal subunit protein eS19 of Thermococcus kodakarensis (strain ATCC BAA-918 / JCM 12380 / KOD1) (Pyrococcus kodakaraensis (strain KOD1)).